A 593-amino-acid chain; its full sequence is NADH-quinone oxidoreductase subunit C/D (593 aa).

The NADH dehydrogenase I subunit C stretch occupies residues 1–184 (MTADNALYIP…DPYSLTLAKQ (184 aa)). The interval 208 to 593 (DYMFLNLGPN…IDFVMADVDR (386 aa)) is NADH dehydrogenase I subunit D.

The protein in the N-terminal section; belongs to the complex I 30 kDa subunit family. This sequence in the C-terminal section; belongs to the complex I 49 kDa subunit family. In terms of assembly, NDH-1 is composed of 13 different subunits. Subunits NuoB, CD, E, F, and G constitute the peripheral sector of the complex.

The protein localises to the cell inner membrane. The enzyme catalyses a quinone + NADH + 5 H(+)(in) = a quinol + NAD(+) + 4 H(+)(out). In terms of biological role, NDH-1 shuttles electrons from NADH, via FMN and iron-sulfur (Fe-S) centers, to quinones in the respiratory chain. The immediate electron acceptor for the enzyme in this species is believed to be ubiquinone. Couples the redox reaction to proton translocation (for every two electrons transferred, four hydrogen ions are translocated across the cytoplasmic membrane), and thus conserves the redox energy in a proton gradient. This chain is NADH-quinone oxidoreductase subunit C/D, found in Pseudomonas syringae pv. tomato (strain ATCC BAA-871 / DC3000).